The sequence spans 1355 residues: DNA-directed RNA polymerase subunit beta' (1355 aa).

Zn(2+) contacts are provided by C219, C293, C300, and C303. Positions 1331–1355 (AEVEVDDEVDDDYEDDDEDDDDYED) are disordered.

This sequence belongs to the RNA polymerase beta' chain family. RpoC2 subfamily. As to quaternary structure, in cyanobacteria the RNAP catalytic core is composed of 2 alpha, 1 beta, 1 beta', 1 gamma and 1 omega subunit. When a sigma factor is associated with the core the holoenzyme is formed, which can initiate transcription. The cofactor is Zn(2+).

The enzyme catalyses RNA(n) + a ribonucleoside 5'-triphosphate = RNA(n+1) + diphosphate. In terms of biological role, DNA-dependent RNA polymerase catalyzes the transcription of DNA into RNA using the four ribonucleoside triphosphates as substrates. This is DNA-directed RNA polymerase subunit beta' from Nostoc sp. (strain PCC 7120 / SAG 25.82 / UTEX 2576).